The primary structure comprises 992 residues: Protein translocase subunit SecA (992 aa).

ATP contacts are provided by residues Gln-86, 104–108 (GEGKT), and Asp-535. Residues 885–910 (IAGGSSEVEQTRKPQRRTVQQIGRND) form a disordered region. Positions 912, 914, 923, and 924 each coordinate Zn(2+). Residues 965–992 (IDNGTLPAASPKTPRGRQPQAVPRGKKR) are disordered.

It belongs to the SecA family. In terms of assembly, monomer and homodimer. Part of the essential Sec protein translocation apparatus which comprises SecA, SecYEG and auxiliary proteins SecDF. Other proteins may also be involved. Zn(2+) serves as cofactor.

Its subcellular location is the cell membrane. The protein localises to the cytoplasm. It catalyses the reaction ATP + H2O + cellular proteinSide 1 = ADP + phosphate + cellular proteinSide 2.. In terms of biological role, part of the Sec protein translocase complex. Interacts with the SecYEG preprotein conducting channel. Has a central role in coupling the hydrolysis of ATP to the transfer of proteins into and across the cell membrane, serving as an ATP-driven molecular motor driving the stepwise translocation of polypeptide chains across the membrane. In Chloroflexus aggregans (strain MD-66 / DSM 9485), this protein is Protein translocase subunit SecA.